The primary structure comprises 262 residues: Phosphomannomutase 1 (262 aa).

Ala2 bears the N-acetylalanine mark. The active-site Nucleophile is the Asp19. Residues Asp19 and Asp21 each contribute to the Mg(2+) site. Catalysis depends on Asp21, which acts as the Proton donor/acceptor. The alpha-D-mannose 1-phosphate site is built by Arg28, Arg132, Arg143, Arg150, Met186, Ser188, and Asp190. Mg(2+) contacts are provided by Asn218, Phe230, Asp232, and Thr235. Position 242 is a phosphoserine (Ser242).

The protein belongs to the eukaryotic PMM family. In terms of assembly, homodimer. The cofactor is Mg(2+). In terms of tissue distribution, strong expression in liver, heart, brain, and pancreas; lower expression in skeletal muscle.

It localises to the cytoplasm. It carries out the reaction alpha-D-mannose 1-phosphate = D-mannose 6-phosphate. It functions in the pathway nucleotide-sugar biosynthesis; GDP-alpha-D-mannose biosynthesis; alpha-D-mannose 1-phosphate from D-fructose 6-phosphate: step 2/2. Its activity is regulated as follows. IMP, a metabolite whose concentration is elevated in anoxia, inhibits phosphomannomutase and phosphoglucomutase activities and strongly enhances glucose-1,6-bisphosphatase activity. Its function is as follows. Involved in the synthesis of the GDP-mannose and dolichol-phosphate-mannose required for a number of critical mannosyl transfer reactions. In addition, may be responsible for the degradation of glucose-1,6-bisphosphate in ischemic brain. The polypeptide is Phosphomannomutase 1 (PMM1) (Homo sapiens (Human)).